The sequence spans 327 residues: GTPase Obg (327 aa).

An Obg domain is found at 1-159 (MQFIDQANII…WEVQLELKLL (159 aa)). Residues 160–327 (AEVGIIGLPN…SLLSEVWKRI (168 aa)) form the OBG-type G domain. ATP is bound by residues 166-173 (GLPNAGKS), 191-195 (FTTLI), 213-216 (DIPG), 280-283 (NKIE), and 309-311 (SSS). Mg(2+)-binding residues include Ser-173 and Thr-193.

The protein belongs to the TRAFAC class OBG-HflX-like GTPase superfamily. OBG GTPase family. Monomer. Mg(2+) serves as cofactor.

It is found in the cytoplasm. Its function is as follows. An essential GTPase which binds GTP, GDP and possibly (p)ppGpp with moderate affinity, with high nucleotide exchange rates and a fairly low GTP hydrolysis rate. Plays a role in control of the cell cycle, stress response, ribosome biogenesis and in those bacteria that undergo differentiation, in morphogenesis control. The sequence is that of GTPase Obg from Prochlorococcus marinus (strain AS9601).